The sequence spans 72 residues: Translation initiation factor IF-1 (72 aa).

The S1-like domain maps to 1-72 (MAKEDNFELE…SKGRITYRAR (72 aa)).

It belongs to the IF-1 family. Component of the 30S ribosomal translation pre-initiation complex which assembles on the 30S ribosome in the order IF-2 and IF-3, IF-1 and N-formylmethionyl-tRNA(fMet); mRNA recruitment can occur at any time during PIC assembly.

The protein resides in the cytoplasm. In terms of biological role, one of the essential components for the initiation of protein synthesis. Stabilizes the binding of IF-2 and IF-3 on the 30S subunit to which N-formylmethionyl-tRNA(fMet) subsequently binds. Helps modulate mRNA selection, yielding the 30S pre-initiation complex (PIC). Upon addition of the 50S ribosomal subunit IF-1, IF-2 and IF-3 are released leaving the mature 70S translation initiation complex. This chain is Translation initiation factor IF-1, found in Saccharophagus degradans (strain 2-40 / ATCC 43961 / DSM 17024).